A 130-amino-acid polypeptide reads, in one-letter code: Small ribosomal subunit protein uS11c (130 aa).

It belongs to the universal ribosomal protein uS11 family. In terms of assembly, part of the 30S ribosomal subunit.

The protein resides in the plastid. It localises to the chloroplast. In Trieres chinensis (Marine centric diatom), this protein is Small ribosomal subunit protein uS11c.